The following is a 30-amino-acid chain: Platelet factor 4 (30 aa).

Belongs to the intercrine alpha (chemokine CxC) family. As to quaternary structure, homotetramer. Interacts with TNFAIP6 (via Link domain). Interacts with CCR1. Interacts with CXCR3. Binds non-covalently to a proteoglycan molecule.

It is found in the secreted. Functionally, chemokine released during platelet aggregation that plays a role in different biological processes including hematopoiesis, cell proliferation, differentiation, and activation. Acts via different functional receptors including CCR1, CXCR3A or CXCR3B. Upon interaction with CXCR3A receptor, induces activated T-lymphocytes migration mediated via downstream Ras/extracellular signal-regulated kinase (ERK) signaling. Neutralizes the anticoagulant effect of heparin by binding more strongly to heparin than to the chondroitin-4-sulfate chains of the carrier molecule. Plays a role in the inhibition of hematopoiesis and in the maintenance of hematopoietic stem cell (HSC) quiescence. Chemotactic for neutrophils and monocytes via CCR1. Inhibits endothelial cell proliferation. In cooperation with toll-like receptor 8/TLR8, induces chromatin remodeling and activates inflammatory gene expression via the TBK1-IRF5 axis. In addition, induces myofibroblast differentiation and collagen synthesis in different precursor cells, including endothelial cells, by stimulating endothelial-to-mesenchymal transition. The sequence is that of Platelet factor 4 (PF4) from Oryctolagus cuniculus (Rabbit).